The following is a 318-amino-acid chain: Ribose-phosphate pyrophosphokinase 2 (318 aa).

Residue R96–D101 participates in ATP binding. The Mg(2+) site is built by D128, H130, D139, and D143. H130 is a binding site for ATP. A binding of phosphoribosylpyrophosphate region spans residues K212–G227.

It belongs to the ribose-phosphate pyrophosphokinase family. In terms of assembly, homodimer. The active form is probably a hexamer composed of 3 homodimers. The cofactor is Mg(2+).

The enzyme catalyses D-ribose 5-phosphate + ATP = 5-phospho-alpha-D-ribose 1-diphosphate + AMP + H(+). The protein operates within metabolic intermediate biosynthesis; 5-phospho-alpha-D-ribose 1-diphosphate biosynthesis; 5-phospho-alpha-D-ribose 1-diphosphate from D-ribose 5-phosphate (route I): step 1/1. With respect to regulation, activated by magnesium and inorganic phosphate. Competitively or non-competitively inhibited by ADP, 2,3-bisphosphoglyceride or GDP. In terms of biological role, catalyzes the synthesis of phosphoribosylpyrophosphate (PRPP) that is essential for nucleotide synthesis. This is Ribose-phosphate pyrophosphokinase 2 (PRPS2) from Homo sapiens (Human).